The chain runs to 211 residues: Methylthioribulose-1-phosphate dehydratase (211 aa).

Residues His101 and His103 each contribute to the Zn(2+) site.

Belongs to the aldolase class II family. MtnB subfamily. The cofactor is Zn(2+).

The enzyme catalyses 5-(methylsulfanyl)-D-ribulose 1-phosphate = 5-methylsulfanyl-2,3-dioxopentyl phosphate + H2O. It participates in amino-acid biosynthesis; L-methionine biosynthesis via salvage pathway; L-methionine from S-methyl-5-thio-alpha-D-ribose 1-phosphate: step 2/6. Catalyzes the dehydration of methylthioribulose-1-phosphate (MTRu-1-P) into 2,3-diketo-5-methylthiopentyl-1-phosphate (DK-MTP-1-P). This chain is Methylthioribulose-1-phosphate dehydratase, found in Alcanivorax borkumensis (strain ATCC 700651 / DSM 11573 / NCIMB 13689 / SK2).